The chain runs to 482 residues: FAD-dependent monooxygenase esdpE (482 aa).

A signal peptide spans 1–21 (MGAERLKVIIVGGSIAGLTLA). 2 residues coordinate FAD: Glu35 and Arg108. N-linked (GlcNAc...) asparagine glycosylation occurs at Asn243. Residues Asp308 and Ala321 each contribute to the FAD site. Residues 440-460 (LFSGSLLLIMSVALLFGVICW) form a helical membrane-spanning segment.

It belongs to the paxM FAD-dependent monooxygenase family. It depends on FAD as a cofactor.

It is found in the membrane. The protein operates within secondary metabolite biosynthesis; terpenoid biosynthesis. In terms of biological role, FAD-dependent monooxygenase; part of the cluster that mediates the biosynthesis of shearones, diterpenoid pyrones (DPs) which are structurally diverse meroterpenoids consisting of a diterpene linked by a pyrone, and which may exhibit a range of bioactivities. Within the pathway, esdpE takes part to the biosynthesis of the molecular scaffold by catalyzing the formation of an (S)-epoxide ring at the terminal olefin of the geranylgeranyl group. The molecular scaffold is commonly biosynthesized by a series of enzymes including the non-reducing polyketide synthase (NR-PKS) esdpA that generates an alpha-pyrone; the prenyltransferase esdpC that attaches a geranylgeranyl pyrophosphate (GGPP) produced by the GGPP synthase (GGPPS) esdpD onto the pyrone unit; the FAD-dependent monooxygenase esdpE that converts an olefin on the diterpene unit into an epoxide; and the terpene cyclase esdpB that catalyzes the cyclization reactions to give the molecular backbone shearone A. In the modification steps, esdpF oxidizes the hydroxy group to a ketone at C-3 and esdpG then attaches hydroxy groups at both C-11 and C-12. After that, esdpI hydroxylates at C-20 and esdpH hydroxylates at C-6'. The ether bridge is generated by nucleophilic attack of the hydroxy group at C-20 to the carbonyl carbon at C-3. EsdpH can also functions prior to esdpI. The different combinations of these modification enzymes lead to the production of diverse shearone derivatives, shearone I being the end product of the pathway. The alpha-ketoglutarate-dependent dioxygenase esdpJ seems not to be involved in this pathway. This is FAD-dependent monooxygenase esdpE from Penicillium shearii (Eupenicillium shearii).